A 431-amino-acid chain; its full sequence is MTQLKQARKGIVTPEMEAVAKTEGLQPEFILKGIADGNIVIPANKLRKNLKLCGIGKGLSTKVNANIGTSTDFGSVASEVEKLKMAEMVGADTIMDLSTGPKINTIRKAILENTCLPLGTVPVYQAAVEAKDHYGAMVKMTADDLFGAIESQAKEGVDFVTVHCGVTRQVIDTFKGQGRLTDIVSRGGTFTAGWMVFHGAENPLYEHFDRLLDICREYDVTLSLGDGLRPGCIADATDRAQVAELLVLGELVKRAREAEVQVMVEGPGHVPLNQIEANVRLQKSICEDAPFYVLGPLVTDIAPGYDHITGAIGGAIAAAAGADFLCYVTPAEHLSLPDVTDVRNGVIASRIAAHAADIVKGVNGAAERDHQMAIARKKLDWETQLKLSLDPEHARVTRDRFKTRGKACSMCGDFCAMELAEKHLGVSVSRC.

Substrate contacts are provided by residues asparagine 66, methionine 95, tyrosine 124, histidine 163, 185-187 (SRG), 226-229 (DGLR), and glutamate 265. Histidine 269 contacts Zn(2+). Tyrosine 292 contacts substrate. Histidine 333 lines the Zn(2+) pocket. Positions 408, 411, and 415 each coordinate [4Fe-4S] cluster.

It belongs to the ThiC family. It depends on [4Fe-4S] cluster as a cofactor.

It carries out the reaction 5-amino-1-(5-phospho-beta-D-ribosyl)imidazole + S-adenosyl-L-methionine = 4-amino-2-methyl-5-(phosphooxymethyl)pyrimidine + CO + 5'-deoxyadenosine + formate + L-methionine + 3 H(+). The protein operates within cofactor biosynthesis; thiamine diphosphate biosynthesis. Functionally, catalyzes the synthesis of the hydroxymethylpyrimidine phosphate (HMP-P) moiety of thiamine from aminoimidazole ribotide (AIR) in a radical S-adenosyl-L-methionine (SAM)-dependent reaction. The protein is Phosphomethylpyrimidine synthase of Dehalococcoides mccartyi (strain CBDB1).